A 361-amino-acid polypeptide reads, in one-letter code: Probable cysteine protease RD19B (361 aa).

Residues M1–G24 form the signal peptide. The propeptide at D25 to N131 is activation peptide. 2 cysteine pairs are disulfide-bonded: C153–C203 and C187–C237. C156 is a catalytic residue. A glycan (N-linked (GlcNAc...) asparagine) is linked at N250. C293 and C347 are joined by a disulfide. Catalysis depends on residues H299 and N326.

The protein belongs to the peptidase C1 family.

It localises to the lytic vacuole. Functionally, probable thiol protease. The polypeptide is Probable cysteine protease RD19B (Arabidopsis thaliana (Mouse-ear cress)).